A 435-amino-acid polypeptide reads, in one-letter code: Serine--tRNA ligase (435 aa).

Thr-234–Glu-236 lines the L-serine pocket. Arg-265 to Glu-267 serves as a coordination point for ATP. Residue Glu-288 participates in L-serine binding. Residue Glu-352–Ser-355 participates in ATP binding. Ser-388 lines the L-serine pocket.

Belongs to the class-II aminoacyl-tRNA synthetase family. Type-1 seryl-tRNA synthetase subfamily. Homodimer. The tRNA molecule binds across the dimer.

Its subcellular location is the cytoplasm. It catalyses the reaction tRNA(Ser) + L-serine + ATP = L-seryl-tRNA(Ser) + AMP + diphosphate + H(+). The enzyme catalyses tRNA(Sec) + L-serine + ATP = L-seryl-tRNA(Sec) + AMP + diphosphate + H(+). It functions in the pathway aminoacyl-tRNA biosynthesis; selenocysteinyl-tRNA(Sec) biosynthesis; L-seryl-tRNA(Sec) from L-serine and tRNA(Sec): step 1/1. Functionally, catalyzes the attachment of serine to tRNA(Ser). Is also able to aminoacylate tRNA(Sec) with serine, to form the misacylated tRNA L-seryl-tRNA(Sec), which will be further converted into selenocysteinyl-tRNA(Sec). This Synechococcus sp. (strain JA-2-3B'a(2-13)) (Cyanobacteria bacterium Yellowstone B-Prime) protein is Serine--tRNA ligase.